The following is a 67-amino-acid chain: Phycobilisome 7.8 kDa linker polypeptide, allophycocyanin-associated, core (67 aa).

Residues 1–56 form the CpcD-like domain; sequence MRVFKVTACVPSQTRIRTQRELQNTYFTKLVPYDNWFREQQRIMKMGGKIVKVELA.

Belongs to the phycobilisome linker protein family.

Its subcellular location is the cellular thylakoid membrane. Functionally, rod linker protein, associated with allophycocyanin. Linker polypeptides determine the state of aggregation and the location of the disk-shaped phycobiliprotein units within the phycobilisome and modulate their spectroscopic properties in order to mediate a directed and optimal energy transfer. The protein is Phycobilisome 7.8 kDa linker polypeptide, allophycocyanin-associated, core (apcC) of Arthrospira platensis (Spirulina platensis).